The following is a 92-amino-acid chain: Small ribosomal subunit protein uS19 (92 aa).

This sequence belongs to the universal ribosomal protein uS19 family.

Protein S19 forms a complex with S13 that binds strongly to the 16S ribosomal RNA. The polypeptide is Small ribosomal subunit protein uS19 (Cellvibrio japonicus (strain Ueda107) (Pseudomonas fluorescens subsp. cellulosa)).